Here is a 249-residue protein sequence, read N- to C-terminus: tRNA pseudouridine synthase A (249 aa).

D53 (nucleophile) is an active-site residue. Y111 serves as a coordination point for substrate.

It belongs to the tRNA pseudouridine synthase TruA family. Homodimer.

It catalyses the reaction uridine(38/39/40) in tRNA = pseudouridine(38/39/40) in tRNA. In terms of biological role, formation of pseudouridine at positions 38, 39 and 40 in the anticodon stem and loop of transfer RNAs. The sequence is that of tRNA pseudouridine synthase A from Streptococcus pyogenes serotype M1.